The sequence spans 110 residues: Light-harvesting complex-like protein OHP1, chloroplastic (110 aa).

The transit peptide at 1 to 41 (MSSSPLSSSLFHPLSTLSTHCHGRRQNLCFNRKQQPFVVRA) directs the protein to the chloroplast. Residues 42-74 (AKLPEGVIVPKAQPKSQPAFLGFTQTAEIWNSR) lie on the Stromal side of the membrane. A helical membrane pass occupies residues 75–95 (ACMIGLIGTFIVELILNKGIL). Topologically, residues 96-110 (ELIGVEIGKGLDLPL) are lumenal.

Belongs to the ELIP/psbS family. As to quaternary structure, may bind chlorophyll and form dimers in the thylakoid membrane. Component of a high molecular weight complex containing OHP1, OHP2 and HCF244, and PSII core proteins D1/D2, HCF136 and HCF173. Interacts with HCF244. Forms a trimeric complex with OHP2 and HCF244 that mutually stabilizes each subunit. As to expression, mostly expressed in cotyledons and shoot apices.

It localises to the plastid. It is found in the chloroplast thylakoid membrane. Its function is as follows. May play a photoprotective role in the thylakoid membrane in response to light stress. Involved in photosystems I (PSI) and II (PSII) core proteins function. Forms a trimeric complex with OHP2 and HCF244 that is required to promote PSII core subunit assembly. The trimeric complex forms a transient PSII reaction center-like complex with PsbA, PsbD, PsbE, PsbF and PsbI subunits in thylakoids for early assembly of PSII as well as PSII repair. The trimeric complex is required for the recruitment of ribosomes to the psbA mRNA during PSII biogenesis and repair. Forms a heterodimer with OHP1 that binds chlorophylls and carotenoids, and that may function in the delivery of pigments to the PsbA subunit of PSII. In Arabidopsis thaliana (Mouse-ear cress), this protein is Light-harvesting complex-like protein OHP1, chloroplastic.